Reading from the N-terminus, the 317-residue chain is Glucokinase (317 aa).

The protein belongs to the ROK (NagC/XylR) family. As to quaternary structure, homodimer. A divalent metal cation is required as a cofactor.

It carries out the reaction D-glucose + ATP = D-glucose 6-phosphate + ADP + H(+). Its function is as follows. Catalyzes the phosphorylation of D-glucose to D-glucose 6-phosphate using ATP as the phosphate donor. Can also phosphorylate 2-deoxyglucose, with lower efficiency. ITP can also serve as a phosphoryl donor. In Thermotoga maritima (strain ATCC 43589 / DSM 3109 / JCM 10099 / NBRC 100826 / MSB8), this protein is Glucokinase.